A 313-amino-acid polypeptide reads, in one-letter code: Ribosomal RNA small subunit methyltransferase H (313 aa).

S-adenosyl-L-methionine-binding positions include 35–37 (GGH), aspartate 55, phenylalanine 79, aspartate 101, and glutamine 108.

The protein belongs to the methyltransferase superfamily. RsmH family.

It is found in the cytoplasm. The enzyme catalyses cytidine(1402) in 16S rRNA + S-adenosyl-L-methionine = N(4)-methylcytidine(1402) in 16S rRNA + S-adenosyl-L-homocysteine + H(+). In terms of biological role, specifically methylates the N4 position of cytidine in position 1402 (C1402) of 16S rRNA. This is Ribosomal RNA small subunit methyltransferase H from Shigella dysenteriae serotype 1 (strain Sd197).